We begin with the raw amino-acid sequence, 851 residues long: Beta-galactosidase BoGH2A (851 aa).

Residues 1-19 (MMIGKLKYLMLGGCLILGS) form the signal peptide. The N-palmitoyl cysteine moiety is linked to residue cysteine 20. Cysteine 20 carries the S-diacylglycerol cysteine lipid modification. The active-site Proton donor is glutamate 437. Glutamate 544 functions as the Nucleophile in the catalytic mechanism.

This sequence belongs to the glycosyl hydrolase 2 family.

Its subcellular location is the cell inner membrane. It catalyses the reaction Hydrolysis of terminal non-reducing beta-D-galactose residues in beta-D-galactosides.. The protein operates within glucan metabolism; xyloglucan degradation. Catalyzes the hydrolysis of terminal non-reducing beta-D-galactose residues in beta-D-galactosides in xyloglucan degradation, converting 'L' units to 'X' units. This Bacteroides ovatus (strain ATCC 8483 / DSM 1896 / JCM 5824 / BCRC 10623 / CCUG 4943 / NCTC 11153) protein is Beta-galactosidase BoGH2A.